The sequence spans 529 residues: Zinc finger CCCH domain-containing protein 65 (529 aa).

A compositionally biased stretch (basic and acidic residues) spans 1–10 (MADADARAPP). Disordered stretches follow at residues 1–36 (MADA…EDEV) and 134–179 (PARK…GSYV). The segment covering 14-31 (PGATPIGSISPSSAAPAA) has biased composition (low complexity). 3 C3H1-type zinc fingers span residues 108-136 (RPGE…HPAR), 237-265 (GSSQ…HRDG), and 285-313 (RPGE…HPDP). Positions 313 to 347 (PSNVASKDPQLEHENGDAPQQDVQGSSSQPNASIW) are disordered. A compositionally biased stretch (polar residues) spans 333-344 (QDVQGSSSQPNA). 2 consecutive C3H1-type zinc fingers follow at residues 433–461 (RPGQ…HPRS) and 477–505 (KPDQ…HPFN).

This chain is Zinc finger CCCH domain-containing protein 65, found in Oryza sativa subsp. japonica (Rice).